A 413-amino-acid chain; its full sequence is Serine hydroxymethyltransferase (413 aa).

(6S)-5,6,7,8-tetrahydrofolate is bound by residues L117 and 121-123 (GHL). K226 carries the post-translational modification N6-(pyridoxal phosphate)lysine. (6S)-5,6,7,8-tetrahydrofolate contacts are provided by residues E239 and 349–351 (SPF).

This sequence belongs to the SHMT family. Homodimer. The cofactor is pyridoxal 5'-phosphate.

The protein resides in the cytoplasm. The catalysed reaction is (6R)-5,10-methylene-5,6,7,8-tetrahydrofolate + glycine + H2O = (6S)-5,6,7,8-tetrahydrofolate + L-serine. It functions in the pathway one-carbon metabolism; tetrahydrofolate interconversion. Its pathway is amino-acid biosynthesis; glycine biosynthesis; glycine from L-serine: step 1/1. Catalyzes the reversible interconversion of serine and glycine with tetrahydrofolate (THF) serving as the one-carbon carrier. This reaction serves as the major source of one-carbon groups required for the biosynthesis of purines, thymidylate, methionine, and other important biomolecules. Also exhibits THF-independent aldolase activity toward beta-hydroxyamino acids, producing glycine and aldehydes, via a retro-aldol mechanism. This is Serine hydroxymethyltransferase from Bacillus cereus (strain G9842).